A 120-amino-acid chain; its full sequence is Glycophorin-A (120 aa).

Gln-1 bears the Pyrrolidone carboxylic acid mark. The tract at residues Gln-1–Leu-40 is disordered. Thr-2 and Thr-5 each carry an O-linked (GalNAc...) threonine glycan. Ser-7 carries an O-linked (GalNAc...) serine glycan. Thr-13 carries an O-linked (GalNAc...) threonine glycan. O-linked (GalNAc...) serine glycosylation is present at Ser-17. Over residues Ser-17–Thr-29 the composition is skewed to low complexity. 2 O-linked (GalNAc...) threonine glycosylation sites follow: Thr-18 and Thr-20. O-linked (GalNAc...) serine glycosylation is present at Ser-21. 2 O-linked (GalNAc...) threonine glycosylation sites follow: Thr-24 and Thr-28. A helical membrane pass occupies residues Val-50–Val-72. The segment at Lys-78 to Gln-120 is disordered. The span at Ala-82–Val-100 shows a compositional bias: pro residues. Positions Ser-107–Gln-120 are enriched in polar residues. Position 119 is a phosphoserine (Ser-119).

Belongs to the glycophorin-A family. As to quaternary structure, homodimer.

The protein resides in the membrane. Glycophorin A is the major intrinsic membrane sialoglycoprotein of the erythrocyte. Appears to be important for the function of SLC4A1 and is required for high activity of SLC4A1. May be involved in translocation of SLC4A1 to the plasma membrane. The chain is Glycophorin-A from Equus caballus (Horse).